The primary structure comprises 145 residues: uncharacterized protein (145 aa).

Residue M1 is modified to N-acetylmethionine. The interval 15 to 41 (QLKNNSGGTNGDRNSGANNGGGENSAP) is disordered. Over residues 16–27 (LKNNSGGTNGDR) the composition is skewed to polar residues. Phosphoserine is present on residues S121 and S126. The interval 125 to 145 (NSFDKQNAKNDDDEDDDDFFD) is disordered. The segment covering 135–145 (DDDEDDDDFFD) has biased composition (acidic residues).

This sequence belongs to the PDCD5 family.

This is an uncharacterized protein from Saccharomyces cerevisiae (strain ATCC 204508 / S288c) (Baker's yeast).